The chain runs to 134 residues: Small ribosomal subunit protein uS9 (134 aa).

Positions 109 to 134 are disordered; that stretch reads DARRTEPHKPSKSTKGPRAKRQKSYR. The span at 118–134 shows a compositional bias: basic residues; that stretch reads PSKSTKGPRAKRQKSYR.

The protein belongs to the universal ribosomal protein uS9 family.

The sequence is that of Small ribosomal subunit protein uS9 from Methanococcus aeolicus (strain ATCC BAA-1280 / DSM 17508 / OCM 812 / Nankai-3).